Here is a 124-residue protein sequence, read N- to C-terminus: ATP synthase subunit H, mitochondrial (124 aa).

The transit peptide at 1–32 (MFPIASRRILLNASVLPLRLCNRNFTTTRISY) directs the protein to the mitochondrion. The tract at residues 89–124 (NVETAHVAKESEEGESEPIEEDWLVLDDAEETKESH) is disordered. The segment covering 100-124 (EEGESEPIEEDWLVLDDAEETKESH) has biased composition (acidic residues).

The protein belongs to the ATPase h subunit family. As to quaternary structure, F-type ATPases have 2 components, CF(1) - the catalytic core - and CF(0) - the membrane proton channel. In yeast, the dimeric form of ATP synthase consists of 17 polypeptides: alpha, beta, gamma, delta, epsilon, 4 (B), 5 (OSCP), 6 (A), 8, 9 (C), d, E (Tim11), f, g, h, i/j and k.

It is found in the mitochondrion. It localises to the mitochondrion inner membrane. Its function is as follows. Mitochondrial membrane ATP synthase (F(1)F(0) ATP synthase or Complex V) produces ATP from ADP in the presence of a proton gradient across the membrane which is generated by electron transport complexes of the respiratory chain. F-type ATPases consist of two structural domains, F(1) - containing the extramembraneous catalytic core and F(0) - containing the membrane proton channel, linked together by a central stalk and a peripheral stalk. During catalysis, ATP synthesis in the catalytic domain of F(1) is coupled via a rotary mechanism of the central stalk subunits to proton translocation. Part of the complex F(0) domain. Minor subunit located with subunit a in the membrane. This is ATP synthase subunit H, mitochondrial (ATP14) from Saccharomyces cerevisiae (strain ATCC 204508 / S288c) (Baker's yeast).